The chain runs to 116 residues: Phycoerythrin alpha-3 subunit (116 aa).

S53, E63, R64, C67, and K85 together coordinate (2R,3E)-phycoerythrobilin.

Belongs to the phycoerythrin family. As to quaternary structure, heterotetramer of 2 different alpha chains and 2 identical beta chains which form 2 alpha-beta heterodimers within the heterotetramer. The two alpha-beta heterodimers are rotated to an open configuration in contrast to the closed configuration found in other cryptophyte species due to the insertion of a single amino acid, Asp-65, in a conserved region of the alpha chain. In the open form, the central chromophores are not in physical contact but are separated by a water-filled channel. Post-translationally, contains three phycoerythrobilin chromophores with binding mediated by both the alpha and beta subunits.

The protein resides in the plastid. It is found in the chloroplast thylakoid membrane. Light-harvesting photosynthetic tetrapyrrole chromophore-protein from the phycobiliprotein complex. The polypeptide is Phycoerythrin alpha-3 subunit (Hemiselmis andersenii (Cryptophyte alga)).